A 597-amino-acid chain; its full sequence is Elongation factor 4 (597 aa).

The 183-residue stretch at 2-184 folds into the tr-type G domain; sequence DHIRNFSIIA…ALIAKVPPPK (183 aa). GTP-binding positions include 14 to 19 and 131 to 134; these read DHGKST and NKID.

Belongs to the TRAFAC class translation factor GTPase superfamily. Classic translation factor GTPase family. LepA subfamily.

Its subcellular location is the cell inner membrane. The enzyme catalyses GTP + H2O = GDP + phosphate + H(+). Its function is as follows. Required for accurate and efficient protein synthesis under certain stress conditions. May act as a fidelity factor of the translation reaction, by catalyzing a one-codon backward translocation of tRNAs on improperly translocated ribosomes. Back-translocation proceeds from a post-translocation (POST) complex to a pre-translocation (PRE) complex, thus giving elongation factor G a second chance to translocate the tRNAs correctly. Binds to ribosomes in a GTP-dependent manner. This Paraburkholderia phymatum (strain DSM 17167 / CIP 108236 / LMG 21445 / STM815) (Burkholderia phymatum) protein is Elongation factor 4.